The following is a 275-amino-acid chain: N-(5'-phosphoribosyl)anthranilate isomerase 2, chloroplastic (275 aa).

Residues 1-32 (MSTGISTDLHVHFGALNFSKTYKSGLSNRTVS) constitute a chloroplast transit peptide.

The protein belongs to the TrpF family. In terms of tissue distribution, expressed in roots and shoots.

The protein resides in the plastid. It is found in the chloroplast. It catalyses the reaction N-(5-phospho-beta-D-ribosyl)anthranilate = 1-(2-carboxyphenylamino)-1-deoxy-D-ribulose 5-phosphate. Its pathway is amino-acid biosynthesis; L-tryptophan biosynthesis; L-tryptophan from chorismate: step 3/5. In Arabidopsis thaliana (Mouse-ear cress), this protein is N-(5'-phosphoribosyl)anthranilate isomerase 2, chloroplastic (PAI2).